The following is a 195-amino-acid chain: Probable nicotinate-nucleotide adenylyltransferase (195 aa).

The protein belongs to the NadD family.

The enzyme catalyses nicotinate beta-D-ribonucleotide + ATP + H(+) = deamido-NAD(+) + diphosphate. Its pathway is cofactor biosynthesis; NAD(+) biosynthesis; deamido-NAD(+) from nicotinate D-ribonucleotide: step 1/1. In terms of biological role, catalyzes the reversible adenylation of nicotinate mononucleotide (NaMN) to nicotinic acid adenine dinucleotide (NaAD). This is Probable nicotinate-nucleotide adenylyltransferase from Gluconobacter oxydans (strain 621H) (Gluconobacter suboxydans).